Reading from the N-terminus, the 130-residue chain is Acyl carrier protein 2, chloroplastic (130 aa).

A chloroplast-targeting transit peptide spans 1–48 (MASITGSSVSFKCAPLQSSFNSKNYALKSSVTFWRRTPVMPRGLSVSC). Positions 52-127 (PEMVTKVSDI…EAADMIEALQ (76 aa)) constitute a Carrier domain. Ser-87 carries the post-translational modification O-(pantetheine 4'-phosphoryl)serine.

It belongs to the acyl carrier protein (ACP) family. In terms of processing, 4'-phosphopantetheine is transferred from CoA to a specific serine of apo-ACP by acpS. This modification is essential for activity because fatty acids are bound in thioester linkage to the sulfhydryl of the prosthetic group. As to expression, roots, leaves and seeds.

Its subcellular location is the plastid. The protein localises to the chloroplast. The protein operates within lipid metabolism; fatty acid biosynthesis. Its function is as follows. Carrier of the growing fatty acid chain in fatty acid biosynthesis. This Spinacia oleracea (Spinach) protein is Acyl carrier protein 2, chloroplastic (ACL1.2).